The primary structure comprises 175 residues: Ribosome maturation factor RimM (175 aa).

The PRC barrel domain occupies 100-173; it reads EGEYYFHEII…IIIIRPMEGL (74 aa).

This sequence belongs to the RimM family. In terms of assembly, binds ribosomal protein uS19.

It is found in the cytoplasm. Functionally, an accessory protein needed during the final step in the assembly of 30S ribosomal subunit, possibly for assembly of the head region. Essential for efficient processing of 16S rRNA. May be needed both before and after RbfA during the maturation of 16S rRNA. It has affinity for free ribosomal 30S subunits but not for 70S ribosomes. In Geobacillus thermodenitrificans (strain NG80-2), this protein is Ribosome maturation factor RimM.